Consider the following 262-residue polypeptide: Phosphatidylserine decarboxylase proenzyme (262 aa).

Active-site charge relay system; for autoendoproteolytic cleavage activity residues include Asp86, His142, and Ser226. The active-site Schiff-base intermediate with substrate; via pyruvic acid; for decarboxylase activity is Ser226. A Pyruvic acid (Ser); by autocatalysis modification is found at Ser226.

The protein belongs to the phosphatidylserine decarboxylase family. PSD-B subfamily. Prokaryotic type I sub-subfamily. As to quaternary structure, heterodimer of a large membrane-associated beta subunit and a small pyruvoyl-containing alpha subunit. Requires pyruvate as cofactor. Is synthesized initially as an inactive proenzyme. Formation of the active enzyme involves a self-maturation process in which the active site pyruvoyl group is generated from an internal serine residue via an autocatalytic post-translational modification. Two non-identical subunits are generated from the proenzyme in this reaction, and the pyruvate is formed at the N-terminus of the alpha chain, which is derived from the carboxyl end of the proenzyme. The autoendoproteolytic cleavage occurs by a canonical serine protease mechanism, in which the side chain hydroxyl group of the serine supplies its oxygen atom to form the C-terminus of the beta chain, while the remainder of the serine residue undergoes an oxidative deamination to produce ammonia and the pyruvoyl prosthetic group on the alpha chain. During this reaction, the Ser that is part of the protease active site of the proenzyme becomes the pyruvoyl prosthetic group, which constitutes an essential element of the active site of the mature decarboxylase.

Its subcellular location is the cell membrane. It catalyses the reaction a 1,2-diacyl-sn-glycero-3-phospho-L-serine + H(+) = a 1,2-diacyl-sn-glycero-3-phosphoethanolamine + CO2. It participates in phospholipid metabolism; phosphatidylethanolamine biosynthesis; phosphatidylethanolamine from CDP-diacylglycerol: step 2/2. Its function is as follows. Catalyzes the formation of phosphatidylethanolamine (PtdEtn) from phosphatidylserine (PtdSer). In Bacillus cereus (strain ZK / E33L), this protein is Phosphatidylserine decarboxylase proenzyme.